The sequence spans 157 residues: MTNGNGTPPEGAPPQLNVLAQYTKDLSFENPNAPASLAPQQQQPAINIQINVGANNVGENEYEVTLSIEGKAESGSSVLFSFELAYAGVFRVLNVPQENLHPLIMIECPRLLFPFAREIIASAVRDGGFPPLMLDPVDFIGLYRQNLERAQQQGQPS.

It belongs to the SecB family. Homotetramer, a dimer of dimers. One homotetramer interacts with 1 SecA dimer.

It localises to the cytoplasm. Its function is as follows. One of the proteins required for the normal export of preproteins out of the cell cytoplasm. It is a molecular chaperone that binds to a subset of precursor proteins, maintaining them in a translocation-competent state. It also specifically binds to its receptor SecA. The chain is Protein-export protein SecB from Rhodopseudomonas palustris (strain TIE-1).